We begin with the raw amino-acid sequence, 122 residues long: Structural protein p14.5 (122 aa).

Disordered regions lie at residues 1–27 (MADF…LEYD) and 85–122 (TSLV…HKSK). Alanine 2 carries the post-translational modification N-acetylalanine; by host. Positions 105–122 (KPKKKKHLFPKLSSHKSK) are enriched in basic residues.

It belongs to the asfivirus structural protein p14.5 family. Interacts with the major capsid protein. Interacts with host IRF3; this interaction interferes with the recruitment of IRF3 to TBK1. In terms of processing, acetylated.

The protein resides in the virion. In terms of biological role, structural protein required for transport of intracellular particles from the assembly sites to the plasma membrane. Binds to both ssDNA and dsDNA. Suppressed the activation of the cGAS/STING pathway by interfering with the recruitment of IRF3 to TBK1, which in turn suppresses IRF3 phosphorylation, decreasing interferon production. The sequence is that of Structural protein p14.5 from African swine fever virus (isolate Tick/Malawi/Lil 20-1/1983) (ASFV).